Consider the following 692-residue polypeptide: Chaperone protein dnaK1 (692 aa).

Position 197 is a phosphothreonine; by autocatalysis (Thr197).

The protein belongs to the heat shock protein 70 family.

In terms of biological role, acts as a chaperone. The sequence is that of Chaperone protein dnaK1 (dnaK1) from Synechocystis sp. (strain ATCC 27184 / PCC 6803 / Kazusa).